The chain runs to 387 residues: DNA double-strand break repair protein Mre11 (387 aa).

Mn(2+) contacts are provided by aspartate 9, histidine 11, aspartate 50, and asparagine 85. Histidine 86 functions as the Proton donor in the catalytic mechanism. The Mn(2+) site is built by histidine 150, aspartate 181, and histidine 183. The segment at 365 to 387 (AVLDDDADAADDDGRPTTVEEFQ) is disordered. Residues 366-375 (VLDDDADAAD) are compositionally biased toward acidic residues.

Belongs to the MRE11/RAD32 family. Homodimer. Forms a heterotetramer composed of two Mre11 subunits and two Rad50 subunits. It depends on Mn(2+) as a cofactor.

With respect to regulation, nuclease activity is regulated by Rad50. In terms of biological role, part of the Rad50/Mre11 complex, which is involved in the early steps of DNA double-strand break (DSB) repair. Mre11 binds to DSB ends and has both double-stranded 3'-5' exonuclease activity and single-stranded endonuclease activity. The sequence is that of DNA double-strand break repair protein Mre11 from Halobacterium salinarum (strain ATCC 700922 / JCM 11081 / NRC-1) (Halobacterium halobium).